Consider the following 170-residue polypeptide: Co-chaperone protein HscB homolog (170 aa).

Positions 5–79 (DHFSLFGLPA…RARYLCEQAG (75 aa)) constitute a J domain.

It belongs to the HscB family. In terms of assembly, interacts with HscA and stimulates its ATPase activity.

In terms of biological role, co-chaperone involved in the maturation of iron-sulfur cluster-containing proteins. Seems to help targeting proteins to be folded toward HscA. In Bordetella parapertussis (strain 12822 / ATCC BAA-587 / NCTC 13253), this protein is Co-chaperone protein HscB homolog.